We begin with the raw amino-acid sequence, 489 residues long: Protein nucleotidyltransferase YdiU (489 aa).

The ATP site is built by Gly-88, Gly-90, Arg-91, Lys-111, Asp-123, Gly-124, Arg-174, and Arg-181. The active-site Proton acceptor is the Asp-250. 2 residues coordinate Mg(2+): Asn-251 and Asp-260. Asp-260 serves as a coordination point for ATP.

Belongs to the SELO family. It depends on Mg(2+) as a cofactor. The cofactor is Mn(2+).

The catalysed reaction is L-seryl-[protein] + ATP = 3-O-(5'-adenylyl)-L-seryl-[protein] + diphosphate. It catalyses the reaction L-threonyl-[protein] + ATP = 3-O-(5'-adenylyl)-L-threonyl-[protein] + diphosphate. It carries out the reaction L-tyrosyl-[protein] + ATP = O-(5'-adenylyl)-L-tyrosyl-[protein] + diphosphate. The enzyme catalyses L-histidyl-[protein] + UTP = N(tele)-(5'-uridylyl)-L-histidyl-[protein] + diphosphate. The catalysed reaction is L-seryl-[protein] + UTP = O-(5'-uridylyl)-L-seryl-[protein] + diphosphate. It catalyses the reaction L-tyrosyl-[protein] + UTP = O-(5'-uridylyl)-L-tyrosyl-[protein] + diphosphate. Functionally, nucleotidyltransferase involved in the post-translational modification of proteins. It can catalyze the addition of adenosine monophosphate (AMP) or uridine monophosphate (UMP) to a protein, resulting in modifications known as AMPylation and UMPylation. The sequence is that of Protein nucleotidyltransferase YdiU from Vibrio cholerae serotype O1 (strain ATCC 39315 / El Tor Inaba N16961).